A 95-amino-acid chain; its full sequence is Cytochrome b-c1 complex subunit 8, mitochondrial (95 aa).

The chain crosses the membrane as a helical span at residues 57–74 (FLYVAIPFVVVWSIWTRA).

Belongs to the UQCRQ/QCR8 family. Component of the ubiquinol-cytochrome c oxidoreductase (cytochrome b-c1 complex, complex III, CIII), a multisubunit enzyme composed of 10 subunits. The complex is composed of 3 respiratory subunits cytochrome b (COB), cytochrome c1 (CYT1) and Rieske protein (RIP1), 2 core protein subunits COR1 and QCR2, and 5 low-molecular weight protein subunits QCR6, QCR7, QCR8, QCR9 and QCR10. The complex exists as an obligatory dimer and forms supercomplexes (SCs) in the inner mitochondrial membrane with a monomer or a dimer of cytochrome c oxidase (complex IV, CIV), resulting in 2 different assemblies (supercomplexes III(2)IV and III(2)IV(2)).

The protein localises to the membrane. The protein resides in the mitochondrion inner membrane. Its function is as follows. Component of the ubiquinol-cytochrome c oxidoreductase, a multisubunit transmembrane complex that is part of the mitochondrial electron transport chain which drives oxidative phosphorylation. The complex plays an important role in the uptake of multiple carbon sources present in different host niches. The polypeptide is Cytochrome b-c1 complex subunit 8, mitochondrial (Candida albicans (strain SC5314 / ATCC MYA-2876) (Yeast)).